The primary structure comprises 231 residues: ATP-dependent dethiobiotin synthetase BioD (231 aa).

Position 12 to 17 (12 to 17) interacts with ATP; sequence EVGKTV. Residue T16 coordinates Mg(2+). The active site involves K37. S41 is a binding site for substrate. Residues D51, 112–115, and 202–204 contribute to the ATP site; these read EGAG and PKL. Residues D51 and E112 each coordinate Mg(2+).

Belongs to the dethiobiotin synthetase family. Homodimer. Mg(2+) is required as a cofactor.

The protein resides in the cytoplasm. The catalysed reaction is (7R,8S)-7,8-diammoniononanoate + CO2 + ATP = (4R,5S)-dethiobiotin + ADP + phosphate + 3 H(+). It functions in the pathway cofactor biosynthesis; biotin biosynthesis; biotin from 7,8-diaminononanoate: step 1/2. Its function is as follows. Catalyzes a mechanistically unusual reaction, the ATP-dependent insertion of CO2 between the N7 and N8 nitrogen atoms of 7,8-diaminopelargonic acid (DAPA, also called 7,8-diammoniononanoate) to form a ureido ring. In Bacillus subtilis subsp. natto, this protein is ATP-dependent dethiobiotin synthetase BioD.